The following is a 64-amino-acid chain: Bacterioferritin-associated ferredoxin (64 aa).

4 residues coordinate [2Fe-2S] cluster: Cys4, Cys6, Cys39, and Cys42.

The protein belongs to the Bfd family. In terms of assembly, monomer. Interacts with bacterioferritin (BFR); up to 12 Bfd proteins can bind to the BFR. [2Fe-2S] cluster is required as a cofactor.

Required for mobilization of iron from the bacterioferritin (BFR) complex. In Escherichia coli O6:H1 (strain CFT073 / ATCC 700928 / UPEC), this protein is Bacterioferritin-associated ferredoxin (bfd).